The sequence spans 154 residues: 6,7-dimethyl-8-ribityllumazine synthase (154 aa).

5-amino-6-(D-ribitylamino)uracil-binding positions include F21, A55–E57, and C79–I81. A84 to T85 contacts (2S)-2-hydroxy-3-oxobutyl phosphate. H87 acts as the Proton donor in catalysis. F112 is a 5-amino-6-(D-ribitylamino)uracil binding site. R126 is a (2S)-2-hydroxy-3-oxobutyl phosphate binding site.

It belongs to the DMRL synthase family. Forms an icosahedral capsid composed of 60 subunits, arranged as a dodecamer of pentamers.

It carries out the reaction (2S)-2-hydroxy-3-oxobutyl phosphate + 5-amino-6-(D-ribitylamino)uracil = 6,7-dimethyl-8-(1-D-ribityl)lumazine + phosphate + 2 H2O + H(+). It participates in cofactor biosynthesis; riboflavin biosynthesis; riboflavin from 2-hydroxy-3-oxobutyl phosphate and 5-amino-6-(D-ribitylamino)uracil: step 1/2. In terms of biological role, catalyzes the formation of 6,7-dimethyl-8-ribityllumazine by condensation of 5-amino-6-(D-ribitylamino)uracil with 3,4-dihydroxy-2-butanone 4-phosphate. This is the penultimate step in the biosynthesis of riboflavin. The polypeptide is 6,7-dimethyl-8-ribityllumazine synthase (Staphylococcus aureus (strain Newman)).